The following is a 155-amino-acid chain: Interleukin-36 receptor antagonist protein (155 aa).

The cysteines at positions 8 and 154 are disulfide-linked.

The protein belongs to the IL-1 family. Interacts with cargo receptor TMED10; the interaction mediates the translocation from the cytoplasm into the ERGIC (endoplasmic reticulum-Golgi intermediate compartment) and thereby secretion. In terms of tissue distribution, predominantly expressed in skin keratinocytes but not in fibroblasts, endothelial cells or melanocytes. Detected also in the spleen, brain leukocyte and macrophage cell types. Increased in lesional psoriasis skin.

It localises to the cytoplasm. The protein localises to the secreted. Functionally, inhibits the activity of interleukin-36 (IL36A,IL36B and IL36G) by binding to receptor IL1RL2 and preventing its association with the coreceptor IL1RAP for signaling. Part of the IL-36 signaling system that is thought to be present in epithelial barriers and to take part in local inflammatory response; similar to the IL-1 system with which it shares the coreceptor. Proposed to play a role in skin inflammation. May be involved in the innate immune response to fungal pathogens, such as Aspergillus fumigatus. May activate an anti-inflammatory signaling pathway by recruiting SIGIRR. This chain is Interleukin-36 receptor antagonist protein, found in Homo sapiens (Human).